The following is a 102-amino-acid chain: ATP-dependent Clp protease adapter protein ClpS (102 aa).

It belongs to the ClpS family. In terms of assembly, binds to the N-terminal domain of the chaperone ClpA.

Involved in the modulation of the specificity of the ClpAP-mediated ATP-dependent protein degradation. The sequence is that of ATP-dependent Clp protease adapter protein ClpS from Shewanella sediminis (strain HAW-EB3).